A 650-amino-acid polypeptide reads, in one-letter code: Acetyl-coenzyme A synthetase (650 aa).

CoA contacts are provided by residues 191–194 (RGGR), threonine 311, and asparagine 335. ATP contacts are provided by residues 387–389 (GEP), 411–416 (DTWWQT), aspartate 500, and arginine 515. Residue serine 523 coordinates CoA. Position 526 (arginine 526) interacts with ATP. Mg(2+)-binding residues include valine 537, histidine 539, and valine 542. Arginine 584 serves as a coordination point for CoA. Lysine 609 is modified (N6-acetyllysine).

Belongs to the ATP-dependent AMP-binding enzyme family. Mg(2+) is required as a cofactor. In terms of processing, acetylated. Deacetylation by the SIR2-homolog deacetylase activates the enzyme.

It carries out the reaction acetate + ATP + CoA = acetyl-CoA + AMP + diphosphate. In terms of biological role, catalyzes the conversion of acetate into acetyl-CoA (AcCoA), an essential intermediate at the junction of anabolic and catabolic pathways. AcsA undergoes a two-step reaction. In the first half reaction, AcsA combines acetate with ATP to form acetyl-adenylate (AcAMP) intermediate. In the second half reaction, it can then transfer the acetyl group from AcAMP to the sulfhydryl group of CoA, forming the product AcCoA. This is Acetyl-coenzyme A synthetase from Shewanella sp. (strain MR-7).